The primary structure comprises 141 residues: Large ribosomal subunit protein uL23B (141 aa).

Positions 1-22 (MSVGKAKGAQKTVQKGIHNKVA) are disordered.

Belongs to the universal ribosomal protein uL23 family. As to quaternary structure, component of the large ribosomal subunit (LSU). Mature yeast ribosomes consist of a small (40S) and a large (60S) subunit. The 40S small subunit contains 1 molecule of ribosomal RNA (18S rRNA) and at least 33 different proteins. The large 60S subunit contains 3 rRNA molecules (25S, 5.8S and 5S rRNA) and at least 46 different proteins. uL23 is associated with the polypeptide exit tunnel.

The protein localises to the cytoplasm. Functionally, this protein binds to a specific region on the 26S rRNA. Component of the ribosome, a large ribonucleoprotein complex responsible for the synthesis of proteins in the cell. The small ribosomal subunit (SSU) binds messenger RNAs (mRNAs) and translates the encoded message by selecting cognate aminoacyl-transfer RNA (tRNA) molecules. The large subunit (LSU) contains the ribosomal catalytic site termed the peptidyl transferase center (PTC), which catalyzes the formation of peptide bonds, thereby polymerizing the amino acids delivered by tRNAs into a polypeptide chain. The nascent polypeptides leave the ribosome through a tunnel in the LSU and interact with protein factors that function in enzymatic processing, targeting, and the membrane insertion of nascent chains at the exit of the ribosomal tunnel. uL23 is a major component of the universal docking site for these factors at the polypeptide exit tunnel. The polypeptide is Large ribosomal subunit protein uL23B (rpl2502) (Schizosaccharomyces pombe (strain 972 / ATCC 24843) (Fission yeast)).